The primary structure comprises 363 residues: UDP-N-acetylglucosamine--N-acetylmuramyl-(pentapeptide) pyrophosphoryl-undecaprenol N-acetylglucosamine transferase (363 aa).

UDP-N-acetyl-alpha-D-glucosamine-binding positions include 15 to 17, asparagine 127, arginine 169, serine 197, isoleucine 251, 270 to 275, and glutamine 296; these read TGG and ALTVSE.

Belongs to the glycosyltransferase 28 family. MurG subfamily.

It localises to the cell inner membrane. It carries out the reaction di-trans,octa-cis-undecaprenyl diphospho-N-acetyl-alpha-D-muramoyl-L-alanyl-D-glutamyl-meso-2,6-diaminopimeloyl-D-alanyl-D-alanine + UDP-N-acetyl-alpha-D-glucosamine = di-trans,octa-cis-undecaprenyl diphospho-[N-acetyl-alpha-D-glucosaminyl-(1-&gt;4)]-N-acetyl-alpha-D-muramoyl-L-alanyl-D-glutamyl-meso-2,6-diaminopimeloyl-D-alanyl-D-alanine + UDP + H(+). It functions in the pathway cell wall biogenesis; peptidoglycan biosynthesis. Its function is as follows. Cell wall formation. Catalyzes the transfer of a GlcNAc subunit on undecaprenyl-pyrophosphoryl-MurNAc-pentapeptide (lipid intermediate I) to form undecaprenyl-pyrophosphoryl-MurNAc-(pentapeptide)GlcNAc (lipid intermediate II). This is UDP-N-acetylglucosamine--N-acetylmuramyl-(pentapeptide) pyrophosphoryl-undecaprenol N-acetylglucosamine transferase from Dichelobacter nodosus (strain VCS1703A).